The sequence spans 232 residues: Ribonuclease 3 (232 aa).

Positions 5–134 (QTVLKNHFEI…FLGALLLDKD (130 aa)) constitute an RNase III domain. Glu47 is a Mg(2+) binding site. Asp51 is a catalytic residue. 2 residues coordinate Mg(2+): Asp120 and Glu123. Residue Glu123 is part of the active site. Residues 160–229 (DYKTHLQELL…AKNAVEKGLD (70 aa)) form the DRBM domain.

It belongs to the ribonuclease III family. As to quaternary structure, homodimer. It depends on Mg(2+) as a cofactor.

It is found in the cytoplasm. It catalyses the reaction Endonucleolytic cleavage to 5'-phosphomonoester.. Digests double-stranded RNA. Involved in the processing of primary rRNA transcript to yield the immediate precursors to the large and small rRNAs (23S and 16S). Processes some mRNAs, and tRNAs when they are encoded in the rRNA operon. Processes pre-crRNA and tracrRNA of type II CRISPR loci if present in the organism. This Streptococcus pneumoniae (strain ATCC BAA-255 / R6) protein is Ribonuclease 3.